The primary structure comprises 261 residues: Acyl-[acyl-carrier-protein]--UDP-N-acetylglucosamine O-acyltransferase (261 aa).

This sequence belongs to the transferase hexapeptide repeat family. LpxA subfamily. In terms of assembly, homotrimer.

The protein resides in the cytoplasm. It catalyses the reaction a (3R)-hydroxyacyl-[ACP] + UDP-N-acetyl-alpha-D-glucosamine = a UDP-3-O-[(3R)-3-hydroxyacyl]-N-acetyl-alpha-D-glucosamine + holo-[ACP]. It functions in the pathway glycolipid biosynthesis; lipid IV(A) biosynthesis; lipid IV(A) from (3R)-3-hydroxytetradecanoyl-[acyl-carrier-protein] and UDP-N-acetyl-alpha-D-glucosamine: step 1/6. Functionally, involved in the biosynthesis of lipid A, a phosphorylated glycolipid that anchors the lipopolysaccharide to the outer membrane of the cell. The sequence is that of Acyl-[acyl-carrier-protein]--UDP-N-acetylglucosamine O-acyltransferase from Aquifex aeolicus (strain VF5).